The following is a 193-amino-acid chain: ATP-dependent Clp protease proteolytic subunit (193 aa).

The active-site Nucleophile is Ser98. Residue His123 is part of the active site.

The protein belongs to the peptidase S14 family. In terms of assembly, fourteen ClpP subunits assemble into 2 heptameric rings which stack back to back to give a disk-like structure with a central cavity, resembling the structure of eukaryotic proteasomes.

It localises to the cytoplasm. The enzyme catalyses Hydrolysis of proteins to small peptides in the presence of ATP and magnesium. alpha-casein is the usual test substrate. In the absence of ATP, only oligopeptides shorter than five residues are hydrolyzed (such as succinyl-Leu-Tyr-|-NHMec, and Leu-Tyr-Leu-|-Tyr-Trp, in which cleavage of the -Tyr-|-Leu- and -Tyr-|-Trp bonds also occurs).. Its function is as follows. Cleaves peptides in various proteins in a process that requires ATP hydrolysis. Has a chymotrypsin-like activity. Plays a major role in the degradation of misfolded proteins. The chain is ATP-dependent Clp protease proteolytic subunit from Lachnospira eligens (strain ATCC 27750 / DSM 3376 / VPI C15-48 / C15-B4) (Eubacterium eligens).